The chain runs to 452 residues: Sesamin methylene transferase (452 aa).

This sequence belongs to the GcvT family. As to quaternary structure, homotrimer.

The catalysed reaction is (+)-sesamin + (6S)-5,6,7,8-tetrahydrofolyl-(gamma-L-Glu)(n) = (+)-sesamin monocatechol + (6R)-5,10-methylenetetrahydrofolyl-(gamma-L-Glu)(n). It catalyses the reaction (+)-sesamin monocatechol + (6S)-5,6,7,8-tetrahydrofolyl-(gamma-L-Glu)(n) = (+)-sesamin dicatechol + (6R)-5,10-methylenetetrahydrofolyl-(gamma-L-Glu)(n). Its function is as follows. Converts sesamin into sesamin mono- and di-catechol. Catalyzes a ring cleavage to transfer the methylene group to tetrahydrofolate (THF). Also active with (+)-episesamin, (-)-asarinin, sesaminol, (+)-sesamolin and piperine. In Sinomonas sp. (strain No.22), this protein is Sesamin methylene transferase.